The sequence spans 121 residues: Large ribosomal subunit protein bL21 (121 aa).

The protein belongs to the bacterial ribosomal protein bL21 family. Part of the 50S ribosomal subunit. Contacts protein L20.

Functionally, this protein binds to 23S rRNA in the presence of protein L20. This is Large ribosomal subunit protein bL21 from Synechococcus sp. (strain CC9605).